Here is a 175-residue protein sequence, read N- to C-terminus: MSILPIVTAPDDRLKQKSQPVLEFTDQTRKFMDDMLKTMYHEDGAGLAAVQVGVLKRILVIDIKDHDSVERPKDFYPLFIVNPEMIEKSEELIKSNEGCISVPGQRIEVARPESIKIRYLDYHGKSQELKANDWLARVIQHEYDHLEGKLMIDYLSNLKRDVVLRKLKKLKNNIV.

Residues cysteine 99 and histidine 141 each coordinate Fe cation. Residue glutamate 142 is part of the active site. A Fe cation-binding site is contributed by histidine 145.

It belongs to the polypeptide deformylase family. It depends on Fe(2+) as a cofactor.

The catalysed reaction is N-terminal N-formyl-L-methionyl-[peptide] + H2O = N-terminal L-methionyl-[peptide] + formate. Its function is as follows. Removes the formyl group from the N-terminal Met of newly synthesized proteins. Requires at least a dipeptide for an efficient rate of reaction. N-terminal L-methionine is a prerequisite for activity but the enzyme has broad specificity at other positions. This Rickettsia akari (strain Hartford) protein is Peptide deformylase.